The chain runs to 869 residues: Bifunctional uridylyltransferase/uridylyl-removing enzyme (869 aa).

Residues methionine 1 to valine 331 form a uridylyltransferase region. The tract at residues isoleucine 332 to leucine 688 is uridylyl-removing. Positions valine 450–leucine 572 constitute an HD domain. 2 ACT domains span residues glutamine 689–glycine 773 and leucine 800–isoleucine 869.

Belongs to the GlnD family. It depends on Mg(2+) as a cofactor.

The catalysed reaction is [protein-PII]-L-tyrosine + UTP = [protein-PII]-uridylyl-L-tyrosine + diphosphate. It catalyses the reaction [protein-PII]-uridylyl-L-tyrosine + H2O = [protein-PII]-L-tyrosine + UMP + H(+). With respect to regulation, uridylyltransferase (UTase) activity is inhibited by glutamine, while glutamine activates uridylyl-removing (UR) activity. In terms of biological role, modifies, by uridylylation and deuridylylation, the PII regulatory proteins (GlnB and homologs), in response to the nitrogen status of the cell that GlnD senses through the glutamine level. Under low glutamine levels, catalyzes the conversion of the PII proteins and UTP to PII-UMP and PPi, while under higher glutamine levels, GlnD hydrolyzes PII-UMP to PII and UMP (deuridylylation). Thus, controls uridylylation state and activity of the PII proteins, and plays an important role in the regulation of nitrogen assimilation and metabolism. The chain is Bifunctional uridylyltransferase/uridylyl-removing enzyme from Cupriavidus pinatubonensis (strain JMP 134 / LMG 1197) (Cupriavidus necator (strain JMP 134)).